Here is a 149-residue protein sequence, read N- to C-terminus: D-aminoacyl-tRNA deacylase (149 aa).

Positions 137–138 (GP) match the Gly-cisPro motif, important for rejection of L-amino acids motif.

Belongs to the DTD family. Homodimer.

Its subcellular location is the cytoplasm. The enzyme catalyses glycyl-tRNA(Ala) + H2O = tRNA(Ala) + glycine + H(+). It carries out the reaction a D-aminoacyl-tRNA + H2O = a tRNA + a D-alpha-amino acid + H(+). Functionally, an aminoacyl-tRNA editing enzyme that deacylates mischarged D-aminoacyl-tRNAs. Also deacylates mischarged glycyl-tRNA(Ala), protecting cells against glycine mischarging by AlaRS. Acts via tRNA-based rather than protein-based catalysis; rejects L-amino acids rather than detecting D-amino acids in the active site. By recycling D-aminoacyl-tRNA to D-amino acids and free tRNA molecules, this enzyme counteracts the toxicity associated with the formation of D-aminoacyl-tRNA entities in vivo and helps enforce protein L-homochirality. This Clostridium botulinum (strain Eklund 17B / Type B) protein is D-aminoacyl-tRNA deacylase.